The following is a 250-amino-acid chain: tRNA pseudouridine synthase A (250 aa).

Catalysis depends on Asp-53, which acts as the Nucleophile. Substrate is bound at residue Tyr-111.

This sequence belongs to the tRNA pseudouridine synthase TruA family. Homodimer.

The enzyme catalyses uridine(38/39/40) in tRNA = pseudouridine(38/39/40) in tRNA. Functionally, formation of pseudouridine at positions 38, 39 and 40 in the anticodon stem and loop of transfer RNAs. In Streptococcus uberis (strain ATCC BAA-854 / 0140J), this protein is tRNA pseudouridine synthase A.